Reading from the N-terminus, the 264-residue chain is Siroheme biosynthesis protein met8 (264 aa).

NAD(+) is bound by residues 32-33 and 53-56; these read VV and PKAG. Residue D117 is the Proton acceptor of the active site.

This sequence belongs to the precorrin-2 dehydrogenase / sirohydrochlorin ferrochelatase family. MET8 subfamily.

It localises to the cytoplasm. The protein resides in the nucleus. It catalyses the reaction precorrin-2 + NAD(+) = sirohydrochlorin + NADH + 2 H(+). The catalysed reaction is siroheme + 2 H(+) = sirohydrochlorin + Fe(2+). The protein operates within porphyrin-containing compound metabolism; siroheme biosynthesis; siroheme from sirohydrochlorin: step 1/1. It functions in the pathway porphyrin-containing compound metabolism; siroheme biosynthesis; sirohydrochlorin from precorrin-2: step 1/1. Functionally, catalyzes the conversion of precorrin-2 into siroheme. This reaction consist of the NAD-dependent oxidation of precorrin-2 into sirohydrochlorin and its subsequent ferrochelation into siroheme. This chain is Siroheme biosynthesis protein met8 (met8), found in Schizosaccharomyces pombe (strain 972 / ATCC 24843) (Fission yeast).